The primary structure comprises 723 residues: Catalase-peroxidase (723 aa).

Positions 96-225 form a cross-link, tryptophyl-tyrosyl-methioninium (Trp-Tyr) (with M-251); sequence WHAAGSYRVA…LAAVMMGLIY (130 aa). The Proton acceptor role is filled by His-97. A cross-link (tryptophyl-tyrosyl-methioninium (Tyr-Met) (with W-96)) is located at residues 225 to 251; the sequence is YVNPEGVDGNPDPLKTAEDVRVTFARM. Residue His-266 coordinates heme b.

The protein belongs to the peroxidase family. Peroxidase/catalase subfamily. As to quaternary structure, homodimer or homotetramer. The cofactor is heme b. Formation of the three residue Trp-Tyr-Met cross-link is important for the catalase, but not the peroxidase activity of the enzyme.

The enzyme catalyses H2O2 + AH2 = A + 2 H2O. It catalyses the reaction 2 H2O2 = O2 + 2 H2O. In terms of biological role, bifunctional enzyme with both catalase and broad-spectrum peroxidase activity. This is Catalase-peroxidase from Alkalilimnicola ehrlichii (strain ATCC BAA-1101 / DSM 17681 / MLHE-1).